Reading from the N-terminus, the 444-residue chain is Glycine receptor subunit alphaZ1 (444 aa).

Positions 1–24 (MFALGIYLWETIVFFSLAASQQAA) are cleaved as a signal peptide. Residues 25–246 (ARKAASPMPP…RFHLERQMGY (222 aa)) are Extracellular-facing. Residue asparagine 62 is glycosylated (N-linked (GlcNAc...) asparagine). The glycine site is built by arginine 89 and serine 153. A disulfide bridge connects residues cysteine 162 and cysteine 176. Zn(2+) contacts are provided by glutamate 216 and aspartate 218. Cysteine 222 and cysteine 233 form a disulfide bridge. 226 to 231 (YNTGKF) lines the strychnine pocket. Threonine 228 is a binding site for glycine. A Zn(2+)-binding site is contributed by histidine 239. A helical membrane pass occupies residues 247-268 (YLIQMYIPSLLIVILSWVSFWI). Residues 269-273 (NMDAA) are Cytoplasmic-facing. The chain crosses the membrane as a helical span at residues 274–294 (PARVGLGITTVLTMTTQSSGS). Residues 295 to 305 (RASLPKVSYVK) lie on the Extracellular side of the membrane. Residues 306–326 (AIDIWMAVCLLFVFSALLEYA) traverse the membrane as a helical segment. The Cytoplasmic portion of the chain corresponds to 327-412 (AVNFIARQHK…FISRAKRIDT (86 aa)). The helical transmembrane segment at 413 to 433 (VSRVAFPLVFLIFNIFYWITY) threads the bilayer. The Extracellular portion of the chain corresponds to 434-444 (KIIRSEDIHKQ).

This sequence belongs to the ligand-gated ion channel (TC 1.A.9) family. Glycine receptor (TC 1.A.9.3) subfamily. GLRA1 sub-subfamily. Homopentamer (in vitro). Heteropentamer composed of glra1 and glrb. Both homopentamers and heteropentamers form functional ion channels. Interacts with glrb. In terms of tissue distribution, expressed in brain.

Its subcellular location is the postsynaptic cell membrane. The protein localises to the synapse. It localises to the perikaryon. It is found in the cell projection. The protein resides in the dendrite. Its subcellular location is the cell membrane. The enzyme catalyses chloride(in) = chloride(out). Its activity is regulated as follows. Activated by glycine and taurine. Inhibited by strychnine. Allosterically activated by ivermectin. Inhibited by picrotoxinin. Strychnine binding locks the channel in a closed conformation and prevents channel opening in response to extracellular glycine. Can also be activated by GABA and inhibited by bicuculline, but this requires heterologous expression in human cells. Its function is as follows. Subunit of heteromeric glycine-gated chloride channels. Plays an important role in the down-regulation of neuronal excitability. Contributes to the generation of inhibitory postsynaptic currents. Channel activity is potentiated by ethanol. This is Glycine receptor subunit alphaZ1 (glra1) from Danio rerio (Zebrafish).